The sequence spans 521 residues: Cholesterol side-chain cleavage enzyme, mitochondrial (521 aa).

The transit peptide at Met1 to Gly39 directs the protein to the mitochondrion. Cys462 contacts heme.

The protein belongs to the cytochrome P450 family. In terms of assembly, interacts with FDX1/adrenodoxin. The cofactor is heme.

It is found in the mitochondrion inner membrane. The enzyme catalyses 6 reduced [adrenodoxin] + cholesterol + 3 O2 + 6 H(+) = 4-methylpentanal + pregnenolone + 6 oxidized [adrenodoxin] + 4 H2O. The catalysed reaction is 2 reduced [adrenodoxin] + cholesterol + O2 + 2 H(+) = (22R)-hydroxycholesterol + 2 oxidized [adrenodoxin] + H2O. It carries out the reaction (22R)-hydroxycholesterol + 2 reduced [adrenodoxin] + O2 + 2 H(+) = (20R,22R)-20,22-dihydroxycholesterol + 2 oxidized [adrenodoxin] + H2O. It catalyses the reaction (20R,22R)-20,22-dihydroxycholesterol + 2 reduced [adrenodoxin] + O2 + 2 H(+) = 4-methylpentanal + pregnenolone + 2 oxidized [adrenodoxin] + 2 H2O. The protein operates within lipid metabolism; C21-steroid hormone metabolism. It functions in the pathway steroid metabolism; cholesterol metabolism. In terms of biological role, a cytochrome P450 monooxygenase that catalyzes the side-chain hydroxylation and cleavage of cholesterol to pregnenolone, the precursor of most steroid hormones. Catalyzes three sequential oxidation reactions of cholesterol, namely the hydroxylation at C22 followed with the hydroxylation at C20 to yield 20R,22R-hydroxycholesterol that is further cleaved between C20 and C22 to yield the C21-steroid pregnenolone and 4-methylpentanal. Mechanistically, uses molecular oxygen inserting one oxygen atom into a substrate and reducing the second into a water molecule. Two electrons are provided by NADPH via a two-protein mitochondrial transfer system comprising flavoprotein FDXR (adrenodoxin/ferredoxin reductase) and nonheme iron-sulfur protein FDX1 or FDX2 (adrenodoxin/ferredoxin). The chain is Cholesterol side-chain cleavage enzyme, mitochondrial from Homo sapiens (Human).